The primary structure comprises 497 residues: MSNQHIEELNDQQIVRREKMMALAEQGIDPFGKRFDRTANSAELKEKYADKTKEELHELNETAIVAGRLMTKRGKGKVGFAHLQDREGQIQLYVRKDSVSEDNYEIFKKADLGDFIGVEGEVMRTDMGELSIKATKLTHLSKSLRPLPEKFHGLTDIETIYRKRHLDLISNRESFDRFVTRSKMISEIRRYLDGLDFLEVETPVLHNEAGGAAARPFVTHHNAQNIDMVLRIATELHLKRLIVGGMERVYEIGRIFRNEGMDATHNPEFTSIEVYQAYADYLDIMNLTEGIIQHAAKAVKGDGPIDYQGTEIRINEPFKRVHMVDAIKEVTGVDFWPEMTVEEAIALAKEKQVPLEKHFTSVGHIINAFFEEFVEETLVQPTFVFGHPVEVSPLAKKNPEDTRFTDRFELFIMTKEYANAFTELNDPIDQLSRFEAQAQAKELGDDEATGIDYDFVEALEYGMPPTGGLGIGIDRLCMLLTNTTTIRDVLLFPTMKP.

Residues Glu409 and Glu416 each contribute to the Mg(2+) site.

It belongs to the class-II aminoacyl-tRNA synthetase family. In terms of assembly, homodimer. Mg(2+) is required as a cofactor.

The protein resides in the cytoplasm. The enzyme catalyses tRNA(Lys) + L-lysine + ATP = L-lysyl-tRNA(Lys) + AMP + diphosphate. This Streptococcus pyogenes serotype M6 (strain ATCC BAA-946 / MGAS10394) protein is Lysine--tRNA ligase.